The chain runs to 275 residues: Formamidopyrimidine-DNA glycosylase (275 aa).

Proline 2 functions as the Schiff-base intermediate with DNA in the catalytic mechanism. Glutamate 3 functions as the Proton donor in the catalytic mechanism. Lysine 59 acts as the Proton donor; for beta-elimination activity in catalysis. DNA-binding residues include histidine 94 and arginine 113. An FPG-type zinc finger spans residues 241–275 (LVHTHAKEPCQICGTIIQKTKVNGRGTYYCPNCQN). Catalysis depends on arginine 265, which acts as the Proton donor; for delta-elimination activity.

Belongs to the FPG family. Monomer. Zn(2+) serves as cofactor.

The enzyme catalyses Hydrolysis of DNA containing ring-opened 7-methylguanine residues, releasing 2,6-diamino-4-hydroxy-5-(N-methyl)formamidopyrimidine.. It catalyses the reaction 2'-deoxyribonucleotide-(2'-deoxyribose 5'-phosphate)-2'-deoxyribonucleotide-DNA = a 3'-end 2'-deoxyribonucleotide-(2,3-dehydro-2,3-deoxyribose 5'-phosphate)-DNA + a 5'-end 5'-phospho-2'-deoxyribonucleoside-DNA + H(+). In terms of biological role, involved in base excision repair of DNA damaged by oxidation or by mutagenic agents. Acts as a DNA glycosylase that recognizes and removes damaged bases. Has a preference for oxidized purines, such as 7,8-dihydro-8-oxoguanine (8-oxoG). Has AP (apurinic/apyrimidinic) lyase activity and introduces nicks in the DNA strand. Cleaves the DNA backbone by beta-delta elimination to generate a single-strand break at the site of the removed base with both 3'- and 5'-phosphates. The sequence is that of Formamidopyrimidine-DNA glycosylase from Ureaplasma parvum serovar 3 (strain ATCC 700970).